An 858-amino-acid polypeptide reads, in one-letter code: KN motif and ankyrin repeat domain-containing protein 2 (858 aa).

Residues 1 to 29 (MAQVLHVSAPFPGTPGPASPPAFPSKEPD) form a disordered region. The tract at residues 1–72 (MAQVLHVSAP…AVQRRPRLGS (72 aa)) is interaction with AIFM1. The span at 12–23 (PGTPGPASPPAF) shows a compositional bias: pro residues. Residues serine 19, serine 83, serine 86, serine 89, and serine 92 each carry the phosphoserine modification. Arginine 105 carries the omega-N-methylarginine modification. The segment at 140-182 (AAPAGLGSLTPSAAGSTSSLVGVGLPPPTPRGSGLSTPVPPSA) is disordered. The span at 148-159 (LTPSAAGSTSSL) shows a compositional bias: polar residues. Residue threonine 168 is modified to Phosphothreonine. Coiled coils occupy residues 183–234 (GHLA…KSQK) and 282–313 (EAAL…QADL). Phosphoserine is present on serine 323. A Phosphothreonine modification is found at threonine 329. Phosphoserine occurs at positions 356 and 375. Disordered stretches follow at residues 412–451 (CDGA…PAHD) and 488–590 (QKEE…SSAK). Low complexity predominate over residues 421–435 (APAESSLSPPESEGA). Residues 436 to 446 (TQAQPEKNTGQ) show a composition bias toward polar residues. Positions 488-499 (QKEEPTDPEAHR) are enriched in basic and acidic residues. Residues 509–528 (GSISPRYESSSEDSSTAENF) show a composition bias toward low complexity. Serine 547 is subject to Phosphoserine. A compositionally biased stretch (basic and acidic residues) spans 555 to 569 (RPKETAKAKTSREES). At threonine 559 the chain carries Phosphothreonine. An ANK 0; degenerate repeat occupies 621 to 658 (RELKVAYTTVLQEWLRLACRSDAHPELVRRHLVTFRAM). ANK repeat units follow at residues 673–703 (NGNT…QVDK), 707–740 (AGYS…DVNA), 745–774 (AGQT…DVNV), 778–808 (DGST…DISI), and 812–842 (DGST…KCSF). Positions 676 to 842 (TALHYSVSHA…YSRMNIKCSF (167 aa)) are interaction with NCOA1.

Interacts (non-phosphorylated form) with NCOA1; NCOA2 AND NCOA3. Interacts with AIFM1. Interacts with ARHGDIA; the interaction is direct and may regulate the interaction of ARHGDIA with RHOA, RAC1 and CDC42. Interacts (via ANK repeats 1-5) with KIF21A. Post-translationally, phosphorylated by casein kinase II upon estrogen stimulation. Phosphorylation induces the release by KANK2 of NCOA1 and its translocation to the nucleus where NCOA1 can activate gene transcription.

It is found in the cytoplasm. The protein resides in the mitochondrion. In terms of biological role, involved in transcription regulation by sequestering in the cytoplasm nuclear receptor coactivators such as NCOA1, NCOA2 and NCOA3. Involved in regulation of caspase-independent apoptosis by sequestering the proapoptotic factor AIFM1 in mitochondria. Pro-apoptotic stimuli can induce its proteasomal degradation allowing the translocation of AIFM1 to the nucleus to induce apoptosis. Involved in the negative control of vitamin D receptor signaling pathway. Involved in actin stress fibers formation through its interaction with ARHGDIA and the regulation of the Rho signaling pathway. May thereby play a role in cell adhesion and migration, regulating for instance podocytes migration during development of the kidney. Through the Rho signaling pathway may also regulate cell proliferation. This Bos taurus (Bovine) protein is KN motif and ankyrin repeat domain-containing protein 2 (KANK2).